A 422-amino-acid chain; its full sequence is Serine--tRNA ligase (422 aa).

231 to 233 (TGE) is a binding site for L-serine. Position 262–264 (262–264 (RQE)) interacts with ATP. Glutamate 285 serves as a coordination point for L-serine. ATP is bound at residue 349 to 352 (EISS). Serine 384 contacts L-serine.

This sequence belongs to the class-II aminoacyl-tRNA synthetase family. Type-1 seryl-tRNA synthetase subfamily. As to quaternary structure, homodimer. The tRNA molecule binds across the dimer.

It localises to the cytoplasm. It catalyses the reaction tRNA(Ser) + L-serine + ATP = L-seryl-tRNA(Ser) + AMP + diphosphate + H(+). It carries out the reaction tRNA(Sec) + L-serine + ATP = L-seryl-tRNA(Sec) + AMP + diphosphate + H(+). The protein operates within aminoacyl-tRNA biosynthesis; selenocysteinyl-tRNA(Sec) biosynthesis; L-seryl-tRNA(Sec) from L-serine and tRNA(Sec): step 1/1. Its function is as follows. Catalyzes the attachment of serine to tRNA(Ser). Is also able to aminoacylate tRNA(Sec) with serine, to form the misacylated tRNA L-seryl-tRNA(Sec), which will be further converted into selenocysteinyl-tRNA(Sec). In Mesoplasma florum (strain ATCC 33453 / NBRC 100688 / NCTC 11704 / L1) (Acholeplasma florum), this protein is Serine--tRNA ligase.